The following is a 585-amino-acid chain: Butyrophilin subfamily 3 member A3 (585 aa).

The N-terminal stretch at 1-29 (MKMASSLACLLLNFHVSVFLVQLLTPCSA) is a signal peptide. Ig-like V-type domains follow at residues 30–139 (QFSV…KALV) and 145–236 (ALGS…ASIS). Topologically, residues 30–248 (QFSVLGPSGP…DPFFTSAQPW (219 aa)) are extracellular. 2 disulfides stabilise this stretch: cysteine 52–cysteine 126 and cysteine 166–cysteine 220. Asparagine 115 carries an N-linked (GlcNAc...) asparagine glycan. The chain crosses the membrane as a helical span at residues 249-269 (IAALAGTLPISLLLLAGASYF). Residues 270 to 585 (LWRQQKEKIA…KPQACTEALY (316 aa)) lie on the Cytoplasmic side of the membrane. Residues 322-518 (RGEKSLAYHE…LTICPTPKEV (197 aa)) enclose the B30.2/SPRY domain. The tract at residues 560–585 (AGAEGVSPSTTTSQNHKPQACTEALY) is disordered. Residues 566 to 576 (SPSTTTSQNHK) show a composition bias toward polar residues.

The protein belongs to the immunoglobulin superfamily. BTN/MOG family.

The protein localises to the membrane. This is Butyrophilin subfamily 3 member A3 (BTN3A3) from Pongo abelii (Sumatran orangutan).